We begin with the raw amino-acid sequence, 889 residues long: Cytoplasmic aconitate hydratase (889 aa).

Substrate is bound by residues Gln86 and 205 to 207 (DSH). The [4Fe-4S] cluster site is built by Cys437, Cys503, and Cys506. Substrate is bound by residues Arg536 and Arg541. Thr628 is modified (phosphothreonine). Substrate-binding positions include Arg699 and 779 to 780 (SR).

Belongs to the aconitase/IPM isomerase family. In terms of assembly, interacts (when associated with the 4Fe-4S) with FBXL5. Interacts with frataxin(81-210). Requires [4Fe-4S] cluster as cofactor.

The protein localises to the cytoplasm. The protein resides in the cytosol. The enzyme catalyses citrate = D-threo-isocitrate. Functionally, bifunctional iron sensor that switches between 2 activities depending on iron availability. Iron deprivation, promotes its mRNA binding activity through which it regulates the expression of genes involved in iron uptake, sequestration and utilization. Binds to iron-responsive elements (IRES) in the untranslated region of target mRNAs preventing for instance the translation of ferritin and aminolevulinic acid synthase and stabilizing the transferrin receptor mRNA. In terms of biological role, conversely, when cellular iron levels are high, binds a 4Fe-4S cluster which precludes RNA binding activity and promotes the aconitase activity, the isomerization of citrate to isocitrate via cis-aconitate. This chain is Cytoplasmic aconitate hydratase (ACO1), found in Homo sapiens (Human).